The sequence spans 200 residues: Recombination protein RecR (200 aa).

A C4-type zinc finger spans residues 59-74; sequence CSVCGSLDTSDPCAIC. Positions 82–177 constitute a Toprim domain; it reads RLLCVVEEVG…SVTMLARGVP (96 aa).

The protein belongs to the RecR family.

Functionally, may play a role in DNA repair. It seems to be involved in an RecBC-independent recombinational process of DNA repair. It may act with RecF and RecO. The sequence is that of Recombination protein RecR from Caulobacter sp. (strain K31).